Consider the following 348-residue polypeptide: D-alanine--D-alanine ligase (348 aa).

The 203-residue stretch at 132 to 334 (KRVLESAGIP…YAELIEELVR (203 aa)) folds into the ATP-grasp domain. 162 to 217 (EAVLSYPVFVKPANMGSSVGISKAESEEELRAAILLALTYDSRILIEQGVLAREIE) provides a ligand contact to ATP. 3 residues coordinate Mg(2+): D288, E301, and N303.

Belongs to the D-alanine--D-alanine ligase family. Requires Mg(2+) as cofactor. It depends on Mn(2+) as a cofactor.

It localises to the cytoplasm. It carries out the reaction 2 D-alanine + ATP = D-alanyl-D-alanine + ADP + phosphate + H(+). It participates in cell wall biogenesis; peptidoglycan biosynthesis. Cell wall formation. In Streptococcus equi subsp. equi (strain 4047), this protein is D-alanine--D-alanine ligase.